The following is a 335-amino-acid chain: MIAITGGGTGGHLAIAKALAIELKNRGENVIFIGSNSGQDRMWFEHSDIFKFKYFFPSRGVVNKKGIHKLFALLNIIKLAFKCRCIFTEHNISSVISVGGYSSAPASFGAVIFRKKLFIHEQNAIKGKLNSILKPFCKKFFSSYGTDTYDYPIDIKFFNTARVRNELKTILFLGGSQGASFINSLALNLALNLKNHNINIIHQCGAKELETTRSKYNEMGVEAVVFDFSNEIEVYMQKSDLCISRAGASTLWELCANALPTIFIPYPYAASNHQFYNAKFLLDSNLAKIYEQNGLDKNILFTDIMNLDINSISMGLRNIVSPNGAKIIIDKILKQ.

Residues 9-11 (TGG), Asn123, Ser176, and Gln274 each bind UDP-N-acetyl-alpha-D-glucosamine.

It belongs to the glycosyltransferase 28 family. MurG subfamily.

The protein localises to the cell inner membrane. The catalysed reaction is di-trans,octa-cis-undecaprenyl diphospho-N-acetyl-alpha-D-muramoyl-L-alanyl-D-glutamyl-meso-2,6-diaminopimeloyl-D-alanyl-D-alanine + UDP-N-acetyl-alpha-D-glucosamine = di-trans,octa-cis-undecaprenyl diphospho-[N-acetyl-alpha-D-glucosaminyl-(1-&gt;4)]-N-acetyl-alpha-D-muramoyl-L-alanyl-D-glutamyl-meso-2,6-diaminopimeloyl-D-alanyl-D-alanine + UDP + H(+). It functions in the pathway cell wall biogenesis; peptidoglycan biosynthesis. Functionally, cell wall formation. Catalyzes the transfer of a GlcNAc subunit on undecaprenyl-pyrophosphoryl-MurNAc-pentapeptide (lipid intermediate I) to form undecaprenyl-pyrophosphoryl-MurNAc-(pentapeptide)GlcNAc (lipid intermediate II). The protein is UDP-N-acetylglucosamine--N-acetylmuramyl-(pentapeptide) pyrophosphoryl-undecaprenol N-acetylglucosamine transferase of Campylobacter fetus subsp. fetus (strain 82-40).